The sequence spans 444 residues: MTRGLYIESYGCQMNVYDALMMEDLLRPVGYAAVSRPEDADIILINTCHIREKASEKLYSTLGRMRVIKKEECILIVAGCVAQAEGEAVFERAPYVNVVVGPQGLHTLPELIMKVKRDKKQINIEFPVVSKFDAISIDRKANGGVSAYVSIQEGCDKFCTFCVVPYTRGPEYSRDVEAILEEVKQLTDRGTKEIVLIGQNVNAYHGTYKGNEWDLGKLIQKVSLIDGVERIRYTTSHPRDMHPSLYEAHRDEKKLAPFVHLPVQSGSDAILRKMNRKHTAEEYLRVVEQLKDSNKNMALSSDFIVGFPGETEKDFEETMKLVESVGFALSYSFKYSPRPGTPGAEYSNQVPEEEKSARLAALQGLLTKQQLQFNKSMEGRVMDVLVGDPSSMRSDRIFGKSEYTQSIHISAPSGSEDCFNRMVRVEILHGRQNSLEGTVLSNAN.

The 115-residue stretch at 3-117 (RGLYIESYGC…LPELIMKVKR (115 aa)) folds into the MTTase N-terminal domain. Residues Cys12, Cys48, Cys80, Cys155, Cys159, and Cys162 each coordinate [4Fe-4S] cluster. Residues 141-374 (ANGGVSAYVS…LLTKQQLQFN (234 aa)) form the Radical SAM core domain. The TRAM domain maps to 375 to 441 (KSMEGRVMDV…QNSLEGTVLS (67 aa)).

This sequence belongs to the methylthiotransferase family. MiaB subfamily. In terms of assembly, monomer. [4Fe-4S] cluster serves as cofactor.

It localises to the cytoplasm. The enzyme catalyses N(6)-dimethylallyladenosine(37) in tRNA + (sulfur carrier)-SH + AH2 + 2 S-adenosyl-L-methionine = 2-methylsulfanyl-N(6)-dimethylallyladenosine(37) in tRNA + (sulfur carrier)-H + 5'-deoxyadenosine + L-methionine + A + S-adenosyl-L-homocysteine + 2 H(+). Catalyzes the methylthiolation of N6-(dimethylallyl)adenosine (i(6)A), leading to the formation of 2-methylthio-N6-(dimethylallyl)adenosine (ms(2)i(6)A) at position 37 in tRNAs that read codons beginning with uridine. The protein is tRNA-2-methylthio-N(6)-dimethylallyladenosine synthase of Anaplasma phagocytophilum (strain HZ).